An 85-amino-acid polypeptide reads, in one-letter code: Small ribosomal subunit protein uS17 (85 aa).

The protein belongs to the universal ribosomal protein uS17 family. As to quaternary structure, part of the 30S ribosomal subunit.

Functionally, one of the primary rRNA binding proteins, it binds specifically to the 5'-end of 16S ribosomal RNA. The protein is Small ribosomal subunit protein uS17 of Mycoplasma pneumoniae (strain ATCC 29342 / M129 / Subtype 1) (Mycoplasmoides pneumoniae).